Reading from the N-terminus, the 187-residue chain is Elongation factor P (187 aa).

At Lys-34 the chain carries N6-(3,6-diaminohexanoyl)-5-hydroxylysine.

The protein belongs to the elongation factor P family. May be beta-lysylated on the epsilon-amino group of Lys-34 by the combined action of EpmA and EpmB, and then hydroxylated on the C5 position of the same residue by EpmC (if this protein is present). Lysylation is critical for the stimulatory effect of EF-P on peptide-bond formation. The lysylation moiety may extend toward the peptidyltransferase center and stabilize the terminal 3-CCA end of the tRNA. Hydroxylation of the C5 position on Lys-34 may allow additional potential stabilizing hydrogen-bond interactions with the P-tRNA.

It localises to the cytoplasm. The protein operates within protein biosynthesis; polypeptide chain elongation. Its function is as follows. Involved in peptide bond synthesis. Alleviates ribosome stalling that occurs when 3 or more consecutive Pro residues or the sequence PPG is present in a protein, possibly by augmenting the peptidyl transferase activity of the ribosome. Modification of Lys-34 is required for alleviation. This chain is Elongation factor P, found in Buchnera aphidicola subsp. Schizaphis graminum (strain Sg).